The primary structure comprises 501 residues: Microtubule-associated protein mmb1 (501 aa).

Polar residues-rich tracts occupy residues 61–95, 103–122, and 132–168; these read NISS…TNNV, RNPS…SNNA, and HENS…SSNA. Disordered regions lie at residues 61–274, 328–381, and 478–501; these read NISS…VKVN, VSRN…TTGN, and NQTS…NRMI. Positions 234-252 are enriched in low complexity; the sequence is SSVVRPPTRTSTTRPLSRV. Polar residues-rich tracts occupy residues 253-274, 367-381, and 478-495; these read NVTN…VKVN, SRIQ…TTGN, and NQTS…SSPL.

It localises to the cytoplasm. Its subcellular location is the cytoskeleton. Involved in the cell polarity process and in regulation of microtubule growth. Has a role in meiosis. Involved in microtubule dynamics. Binds to mitochondria and microtubules, attaching the tubular mitochondria to the microtubule lattice at multiple discrete interaction sites. The chain is Microtubule-associated protein mmb1 from Schizosaccharomyces pombe (strain 972 / ATCC 24843) (Fission yeast).